The sequence spans 191 residues: 3-hydroxyanthranilate 3,4-dioxygenase 2 (191 aa).

Residue Arg-48 participates in O2 binding. Positions 52, 73, and 111 each coordinate Fe cation. Glu-73 is a substrate binding site. Residues Arg-115 and Glu-125 each contribute to the substrate site.

The protein belongs to the 3-HAO family. It depends on Fe(2+) as a cofactor.

The protein localises to the cytoplasm. The catalysed reaction is 3-hydroxyanthranilate + O2 = (2Z,4Z)-2-amino-3-carboxymuconate 6-semialdehyde. It functions in the pathway cofactor biosynthesis; NAD(+) biosynthesis; quinolinate from L-kynurenine: step 3/3. Functionally, catalyzes the oxidative ring opening of 3-hydroxyanthranilate to 2-amino-3-carboxymuconate semialdehyde, which spontaneously cyclizes to quinolinate. The chain is 3-hydroxyanthranilate 3,4-dioxygenase 2 (bna1-2) from Aspergillus clavatus (strain ATCC 1007 / CBS 513.65 / DSM 816 / NCTC 3887 / NRRL 1 / QM 1276 / 107).